We begin with the raw amino-acid sequence, 466 residues long: Secreted RxLR effector protein 101 (466 aa).

Positions 1–21 (MRGAYSVITALLVVASSQIAA) are cleaved as a signal peptide. A RxLR-dEER motif is present at residues 48–63 (RYLRGSQHVHDSNEER). 2 disordered regions span residues 99 to 127 (KMPH…GANA) and 384 to 405 (RTFN…VRSS). Basic residues predominate over residues 109 to 121 (KVSRVTRTGKKMT). A compositionally biased stretch (polar residues) spans 385–395 (TFNGNTDTASL).

This sequence belongs to the RxLR effector family.

It localises to the secreted. The protein localises to the host nucleus. Functionally, secreted effector that partially suppresses the host cell death induced by cell death-inducing proteins. The chain is Secreted RxLR effector protein 101 from Plasmopara viticola (Downy mildew of grapevine).